We begin with the raw amino-acid sequence, 302 residues long: Elongation factor Ts (302 aa).

The involved in Mg(2+) ion dislocation from EF-Tu stretch occupies residues 80-83 (TDFV).

The protein belongs to the EF-Ts family.

The protein resides in the cytoplasm. Its function is as follows. Associates with the EF-Tu.GDP complex and induces the exchange of GDP to GTP. It remains bound to the aminoacyl-tRNA.EF-Tu.GTP complex up to the GTP hydrolysis stage on the ribosome. In Gluconobacter oxydans (strain 621H) (Gluconobacter suboxydans), this protein is Elongation factor Ts.